A 513-amino-acid polypeptide reads, in one-letter code: Lysine--tRNA ligase (513 aa).

A compositionally biased stretch (polar residues) spans 1–11 (MTEPTQPNAAQ). Residues 1-22 (MTEPTQPNAAQPNVVPEVDDNK) are disordered. Mg(2+) is bound by residues glutamate 423 and glutamate 430.

The protein belongs to the class-II aminoacyl-tRNA synthetase family. Homodimer. Mg(2+) serves as cofactor.

The protein localises to the cytoplasm. It carries out the reaction tRNA(Lys) + L-lysine + ATP = L-lysyl-tRNA(Lys) + AMP + diphosphate. The sequence is that of Lysine--tRNA ligase from Paraburkholderia xenovorans (strain LB400).